The sequence spans 769 residues: Neprilysin-21 (769 aa).

Topologically, residues 1–26 (MKPENGAATWHPAKRSCLGRLTTLET) are cytoplasmic. Residues 27–47 (LLLVFLGLLITALLSVLFLWL) form a helical; Signal-anchor for type II membrane protein membrane-spanning segment. Over 48 to 769 (WVLDGYKTFT…MNPERKCQVW (722 aa)) the chain is Extracellular. N-linked (GlcNAc...) asparagine glycosylation occurs at Asn-69. Residues 85-769 (VCTSRECVRL…MNPERKCQVW (685 aa)) enclose the Peptidase M13 domain. 5 disulfide bridges follow: Cys-86–Cys-91, Cys-109–Cys-754, Cys-117–Cys-714, Cys-173–Cys-428, and Cys-638–Cys-766. Asn-221, Asn-240, Asn-272, Asn-307, Asn-356, Asn-412, and Asn-506 each carry an N-linked (GlcNAc...) asparagine glycan. His-601 serves as a coordination point for Zn(2+). Glu-602 is a catalytic residue. Residues His-605 and Glu-663 each contribute to the Zn(2+) site. Asp-667 (proton donor) is an active-site residue. 2 N-linked (GlcNAc...) asparagine glycosylation sites follow: Asn-684 and Asn-698.

It belongs to the peptidase M13 family. The cofactor is Zn(2+).

The protein resides in the cell membrane. Its function is as follows. Probable cell surface protease. This Caenorhabditis elegans protein is Neprilysin-21 (nep-21).